A 440-amino-acid chain; its full sequence is Glutamate-1-semialdehyde 2,1-aminomutase (440 aa).

Lysine 271 is modified (N6-(pyridoxal phosphate)lysine).

The protein belongs to the class-III pyridoxal-phosphate-dependent aminotransferase family. HemL subfamily. In terms of assembly, homodimer. It depends on pyridoxal 5'-phosphate as a cofactor.

It localises to the cytoplasm. The catalysed reaction is (S)-4-amino-5-oxopentanoate = 5-aminolevulinate. Its pathway is porphyrin-containing compound metabolism; protoporphyrin-IX biosynthesis; 5-aminolevulinate from L-glutamyl-tRNA(Glu): step 2/2. The protein is Glutamate-1-semialdehyde 2,1-aminomutase of Chlamydia pneumoniae (Chlamydophila pneumoniae).